The primary structure comprises 218 residues: MFGFLKKVADYTRDAADAANYLIQGLAVTFDHLRRRPITVQYPYEKLIPSERYRGRIHYEFDKCIACEVCVRVCPINLPVVDWVMNKETKKKELRNYSIDFGVCIFCGNCVEYCPTNCLSMTEEYELAAYDRHSLNYDNVALGRLPTSVTTDPSVQPLRELAYLPKGVMDPHDVPANQPRAGQLPAEVLKSLSLQQDSLQGDEGESLQDAPDQDQPKG.

2 consecutive 4Fe-4S ferredoxin-type domains span residues 55 to 84 (GRIH…VDWV) and 95 to 124 (RNYS…MTEE). 8 residues coordinate [4Fe-4S] cluster: C64, C67, C70, C74, C104, C107, C110, and C114. The disordered stretch occupies residues 192–218 (LSLQQDSLQGDEGESLQDAPDQDQPKG).

Belongs to the complex I 23 kDa subunit family. As to quaternary structure, NDH-1 is composed of at least 11 different subunits. It depends on [4Fe-4S] cluster as a cofactor.

The protein localises to the cellular thylakoid membrane. The enzyme catalyses a plastoquinone + NADH + (n+1) H(+)(in) = a plastoquinol + NAD(+) + n H(+)(out). It carries out the reaction a plastoquinone + NADPH + (n+1) H(+)(in) = a plastoquinol + NADP(+) + n H(+)(out). Its function is as follows. NDH-1 shuttles electrons from an unknown electron donor, via FMN and iron-sulfur (Fe-S) centers, to quinones in the respiratory and/or the photosynthetic chain. The immediate electron acceptor for the enzyme in this species is believed to be plastoquinone. Couples the redox reaction to proton translocation, and thus conserves the redox energy in a proton gradient. The sequence is that of NAD(P)H-quinone oxidoreductase subunit I from Prochlorococcus marinus (strain MIT 9303).